We begin with the raw amino-acid sequence, 262 residues long: Putative ABC transporter ATP-binding protein SAV_3608 (262 aa).

In terms of domain architecture, ABC transporter spans 18–248 (LDVAGLAFAY…DTLMRAHRLE (231 aa)). 51–58 (GPNGAGKT) is a binding site for ATP.

This sequence belongs to the ABC transporter superfamily.

It localises to the cell membrane. In terms of biological role, probably part of an ABC transporter complex. Responsible for energy coupling to the transport system. This chain is Putative ABC transporter ATP-binding protein SAV_3608, found in Streptomyces avermitilis (strain ATCC 31267 / DSM 46492 / JCM 5070 / NBRC 14893 / NCIMB 12804 / NRRL 8165 / MA-4680).